A 25-amino-acid polypeptide reads, in one-letter code: Inorganic pyrophosphatase (25 aa).

In terms of assembly, monomer. Mg(2+) serves as cofactor.

The enzyme catalyses diphosphate + H2O = 2 phosphate + H(+). This chain is Inorganic pyrophosphatase, found in Cyanophora paradoxa.